A 55-amino-acid polypeptide reads, in one-letter code: Spermatid nuclear transition protein 1 (55 aa).

Basic residues predominate over residues 1-42; it reads MSTSRKLKSQGMRRGKNRTPHKGVKRSGSKRKYRKSSLKSRK. The segment at 1–55 is disordered; the sequence is MSTSRKLKSQGMRRGKNRTPHKGVKRSGSKRKYRKSSLKSRKRCDDANRNLRSHL. A phosphoserine mark is found at Ser-9, Ser-36, Ser-37, and Ser-40.

Belongs to the nuclear transition protein 1 family. Testis.

It localises to the nucleus. The protein resides in the chromosome. In terms of biological role, plays a key role in the replacement of histones to protamine in the elongating spermatids of mammals. In condensing spermatids, loaded onto the nucleosomes, where it promotes the recruitment and processing of protamines, which are responsible for histone eviction. The chain is Spermatid nuclear transition protein 1 (TNP1) from Bos taurus (Bovine).